The primary structure comprises 432 residues: Adenosylhomocysteinase (432 aa).

T56, D131, and E156 together coordinate substrate. Residue T157–T159 participates in NAD(+) binding. Positions 186 and 190 each coordinate substrate. NAD(+)-binding positions include N191, G222–G227, E243, I299–H301, and N346.

Belongs to the adenosylhomocysteinase family. Requires NAD(+) as cofactor.

The catalysed reaction is S-adenosyl-L-homocysteine + H2O = L-homocysteine + adenosine. It functions in the pathway amino-acid biosynthesis; L-homocysteine biosynthesis; L-homocysteine from S-adenosyl-L-homocysteine: step 1/1. Adenosylhomocysteine is a competitive inhibitor of S-adenosyl-L-methionine-dependent methyl transferase reactions; therefore adenosylhomocysteinase may play a key role in the control of methylations via regulation of the intracellular concentration of adenosylhomocysteine. The sequence is that of Adenosylhomocysteinase (Ahcy13) from Anopheles gambiae (African malaria mosquito).